Reading from the N-terminus, the 212-residue chain is Methylthioribulose-1-phosphate dehydratase (212 aa).

The Zn(2+) site is built by His-99 and His-101.

Belongs to the aldolase class II family. MtnB subfamily. In terms of assembly, homotetramer. Zn(2+) is required as a cofactor.

It catalyses the reaction 5-(methylsulfanyl)-D-ribulose 1-phosphate = 5-methylsulfanyl-2,3-dioxopentyl phosphate + H2O. The protein operates within amino-acid biosynthesis; L-methionine biosynthesis via salvage pathway; L-methionine from S-methyl-5-thio-alpha-D-ribose 1-phosphate: step 2/6. Its function is as follows. Catalyzes the dehydration of methylthioribulose-1-phosphate (MTRu-1-P) into 2,3-diketo-5-methylthiopentyl-1-phosphate (DK-MTP-1-P). This is Methylthioribulose-1-phosphate dehydratase from Bacillus pumilus (strain SAFR-032).